Here is a 357-residue protein sequence, read N- to C-terminus: Leucoanthocyanidin dioxygenase (357 aa).

A Fe2OG dioxygenase domain is found at 212–311; the sequence is LLLQMKINYY…RISWAVFCEP (100 aa). 3 residues coordinate Fe cation: H236, D238, and H292.

Belongs to the iron/ascorbate-dependent oxidoreductase family. The cofactor is Fe cation. L-ascorbate is required as a cofactor.

It catalyses the reaction a (2R,3S,4S)-leucoanthocyanidin + 2-oxoglutarate + O2 = a 4-H-anthocyanidin with a 3-hydroxy group + succinate + CO2 + 2 H2O. It participates in pigment biosynthesis; anthocyanin biosynthesis. Its function is as follows. Oxidation of leucoanthocyanidins into anthocyanidins. The chain is Leucoanthocyanidin dioxygenase (ANS) from Malus domestica (Apple).